Consider the following 380-residue polypeptide: Succinate--CoA ligase [ADP-forming] subunit beta (380 aa).

One can recognise an ATP-grasp domain in the interval 9–236 (KGVFADAGIP…EAAGDELEAK (228 aa)). Residues lysine 45, 52–54 (GRG), glutamate 91, valine 94, and glutamate 99 each bind ATP. Positions 191 and 205 each coordinate Mg(2+). Substrate-binding positions include asparagine 256 and 313-315 (GIT).

Belongs to the succinate/malate CoA ligase beta subunit family. Heterotetramer of two alpha and two beta subunits. It depends on Mg(2+) as a cofactor.

It catalyses the reaction succinate + ATP + CoA = succinyl-CoA + ADP + phosphate. The enzyme catalyses GTP + succinate + CoA = succinyl-CoA + GDP + phosphate. Its pathway is carbohydrate metabolism; tricarboxylic acid cycle; succinate from succinyl-CoA (ligase route): step 1/1. Functionally, succinyl-CoA synthetase functions in the citric acid cycle (TCA), coupling the hydrolysis of succinyl-CoA to the synthesis of either ATP or GTP and thus represents the only step of substrate-level phosphorylation in the TCA. The beta subunit provides nucleotide specificity of the enzyme and binds the substrate succinate, while the binding sites for coenzyme A and phosphate are found in the alpha subunit. The polypeptide is Succinate--CoA ligase [ADP-forming] subunit beta (Natronomonas pharaonis (strain ATCC 35678 / DSM 2160 / CIP 103997 / JCM 8858 / NBRC 14720 / NCIMB 2260 / Gabara) (Halobacterium pharaonis)).